Consider the following 151-residue polypeptide: Transcriptional regulator MraZ (151 aa).

SpoVT-AbrB domains follow at residues 5–51 and 81–124; these read AHEL…PVAE and AEIL…GREQ.

This sequence belongs to the MraZ family. In terms of assembly, forms oligomers.

The protein resides in the cytoplasm. Its subcellular location is the nucleoid. This Neisseria gonorrhoeae (strain ATCC 700825 / FA 1090) protein is Transcriptional regulator MraZ.